Here is a 153-residue protein sequence, read N- to C-terminus: Large ribosomal subunit protein uL30 (153 aa).

It belongs to the universal ribosomal protein uL30 family. As to quaternary structure, part of the 50S ribosomal subunit.

This chain is Large ribosomal subunit protein uL30, found in Methanoculleus marisnigri (strain ATCC 35101 / DSM 1498 / JR1).